Here is an 81-residue protein sequence, read N- to C-terminus: Conotoxin Im6.1 (81 aa).

A signal peptide spans 1-20 (MSKLGVVLFTLLLLVPLVTP). Positions 21 to 47 (ERDGGKWTMLAKNKKAMKRNLMDFITR) are excised as a propeptide. Intrachain disulfides connect cysteine 49–cysteine 61, cysteine 54–cysteine 67, and cysteine 60–cysteine 76.

Belongs to the conotoxin M superfamily. As to expression, expressed by the venom duct.

The protein resides in the secreted. The polypeptide is Conotoxin Im6.1 (Conus imperialis (Imperial cone)).